A 142-amino-acid chain; its full sequence is MAKKITGYIKLQIPAGKANPSPPVGPALGQHGVNIMEFCKAFNAETQSLEAGMPIPVVITVYSDRSFTFVKKTPPAAFLLKKAAGIKSGSGKPNTQKVGKVTRKQLEEIVAMKKADLTAADIEAGVRTIAGSARAMGLTVEE.

The protein belongs to the universal ribosomal protein uL11 family. Part of the ribosomal stalk of the 50S ribosomal subunit. Interacts with L10 and the large rRNA to form the base of the stalk. L10 forms an elongated spine to which L12 dimers bind in a sequential fashion forming a multimeric L10(L12)X complex. In terms of processing, one or more lysine residues are methylated.

Its function is as follows. Forms part of the ribosomal stalk which helps the ribosome interact with GTP-bound translation factors. The sequence is that of Large ribosomal subunit protein uL11 from Dichelobacter nodosus (strain VCS1703A).